A 279-amino-acid chain; its full sequence is Digeranylgeranylglyceryl phosphate synthase (279 aa).

A run of 6 helical transmembrane segments spans residues 27–47 (LIAT…VALI), 90–110 (FVGG…IAII), 127–147 (VLGN…GGAF), 199–219 (TGIF…LPFG), 222–242 (WGLF…FGAF), and 259–279 (TSIL…AAVI).

The protein belongs to the UbiA prenyltransferase family. DGGGP synthase subfamily. Mg(2+) is required as a cofactor.

It localises to the cell membrane. The catalysed reaction is sn-3-O-(geranylgeranyl)glycerol 1-phosphate + (2E,6E,10E)-geranylgeranyl diphosphate = 2,3-bis-O-(geranylgeranyl)-sn-glycerol 1-phosphate + diphosphate. The protein operates within membrane lipid metabolism; glycerophospholipid metabolism. Prenyltransferase that catalyzes the transfer of the geranylgeranyl moiety of geranylgeranyl diphosphate (GGPP) to the C2 hydroxyl of (S)-3-O-geranylgeranylglyceryl phosphate (GGGP). This reaction is the second ether-bond-formation step in the biosynthesis of archaeal membrane lipids. The sequence is that of Digeranylgeranylglyceryl phosphate synthase from Methanoculleus marisnigri (strain ATCC 35101 / DSM 1498 / JR1).